The sequence spans 181 residues: ADP-ribosylation factor 2 (181 aa).

Gly-2 carries the N-myristoyl glycine lipid modification. GTP is bound by residues 24 to 31 (GLDAAGKT), 67 to 71 (DVGGQ), and 126 to 129 (NKQD).

It belongs to the small GTPase superfamily. Arf family.

The protein localises to the golgi apparatus. Its function is as follows. GTP-binding protein that functions as an allosteric activator of the cholera toxin catalytic subunit, an ADP-ribosyltransferase. Involved in protein trafficking; may modulate vesicle budding and uncoating within the Golgi apparatus. This is ADP-ribosylation factor 2 (ARF2) from Bos taurus (Bovine).